The chain runs to 473 residues: Phosphatidylserine synthase 1 (473 aa).

At Ala-2 the chain carries N-acetylalanine. At 2-35 (ASCVGSRTLSKDDVNYRMHFRMINEQQVEDITID) the chain is on the cytoplasmic side. The helical transmembrane segment at 36-56 (FFYRPHTITLLSFTIISLMYF) threads the bilayer. Residues 57-72 (AFTRDDSVPEDNIWRG) are Lumenal-facing. The helical transmembrane segment at 73-93 (ILSVIFFFLIISVLAFPNGPF) threads the bilayer. Residues 94-102 (TRPHPALWR) lie on the Cytoplasmic side of the membrane. A helical transmembrane segment spans residues 103-123 (MVFGLSVLYFLFLVFLLFLNF). The Lumenal segment spans residues 124-186 (EQVKSLMYWL…AMKALLIRSY (63 aa)). The helical transmembrane segment at 187–207 (GLCWTISITWELTELFFMHLL) threads the bilayer. At 208–216 (PNFAECWWD) the chain is on the cytoplasmic side. The chain crosses the membrane as a helical span at residues 217-237 (QVILDILLCNGGGIWLGMVVC). Topologically, residues 238–286 (RFLEMRTYHWASFKDIHTTTGKIKRAVLQFTPASWTYVRWFDPKSSFQR) are lumenal. A helical transmembrane segment spans residues 287–307 (VAGIYLFMIIWQLTELNTFFL). Topologically, residues 308–319 (KHIFVFQASHPL) are cytoplasmic. Residues 320–342 (SWGRILFIGCITAPTVRQYYAYL) form a helical membrane-spanning segment. The Lumenal segment spans residues 343-355 (TDTQCKRVGTQCW). The chain crosses the membrane as a helical span at residues 356-376 (VFGVIGFLEAIVCIKFGQDLF). The Cytoplasmic segment spans residues 377–383 (SKTQILY). A helical transmembrane segment spans residues 384–404 (VMLWLLCVAFTTFLCLYGMVW). Residues 405–473 (YAEHYGHREK…SKVTNGVGKK (69 aa)) are Lumenal-facing. Phosphoserine occurs at positions 417, 425, 442, and 454. The tract at residues 428–473 (ISWHHGKGSKGSEDSPPKHSSNHESHSSRRRNRHSKSKVTNGVGKK) is disordered. Residues 437–454 (KGSEDSPPKHSSNHESHS) show a composition bias toward basic and acidic residues. A compositionally biased stretch (basic residues) spans 455-464 (SRRRNRHSKS).

Belongs to the phosphatidyl serine synthase family. As to expression, expressed in kidney, testis, lung, skeletal muscle, liver brain, heart and spleen with highest expression in testis, liver, heart and brain.

It localises to the endoplasmic reticulum membrane. The enzyme catalyses a 1,2-diacyl-sn-glycero-3-phosphoethanolamine + L-serine = a 1,2-diacyl-sn-glycero-3-phospho-L-serine + ethanolamine. The catalysed reaction is a 1,2-diacyl-sn-glycero-3-phosphocholine + L-serine = a 1,2-diacyl-sn-glycero-3-phospho-L-serine + choline. The protein operates within phospholipid metabolism; phosphatidylserine biosynthesis. With respect to regulation, potently inhibited by choline in the mitochondria-associated membrane (MAM). Very little inhibition by choline in the endoplasmic reticulum (ER) per se. Its function is as follows. Catalyzes a base-exchange reaction in which the polar head group of phosphatidylethanolamine (PE) or phosphatidylcholine (PC) is replaced by L-serine. Catalyzes mainly the conversion of phosphatidylcholine. Also converts, in vitro and to a lesser extent, phosphatidylethanolamine. This chain is Phosphatidylserine synthase 1 (Ptdss1), found in Mus musculus (Mouse).